Here is a 1233-residue protein sequence, read N- to C-terminus: Rho guanine nucleotide exchange factor 10-like protein (1233 aa).

The segment covering 1 to 10 (MASSNPPPQP) has biased composition (pro residues). Positions 1-93 (MASSNPPPQP…GTGVPAWVSN (93 aa)) are disordered. The segment covering 26–46 (EAEDDPGEAFEFDDSDDEEDT) has biased composition (acidic residues). S40 is modified (phosphoserine). Low complexity predominate over residues 72–89 (PVTDPDPAAAPPGTGVPA). A phosphotyrosine mark is found at Y131 and Y152. The segment at 159–193 (GAPRQAEDLGWSSSEFESYSEDSGEEAKPEVEPAK) is disordered. The span at 183–193 (EEAKPEVEPAK) shows a compositional bias: basic and acidic residues. Residue S240 is modified to Phosphoserine. The DH domain occupies 275–462 (VRRHILGSIV…ETLAEKLNEQ (188 aa)). Over residues 1089–1104 (QEEAEGPRAEEEKPDG) the composition is skewed to basic and acidic residues. Disordered stretches follow at residues 1089–1117 (QEEA…HVGR) and 1140–1161 (PLLS…SEED).

In terms of assembly, interacts with RHOA, RHOB and RHOC.

The protein resides in the cytoplasm. Acts as a guanine nucleotide exchange factor (GEF) for RHOA, RHOB and RHOC. The polypeptide is Rho guanine nucleotide exchange factor 10-like protein (ARHGEF10L) (Pongo abelii (Sumatran orangutan)).